The chain runs to 251 residues: Hydroxyacylglutathione hydrolase (251 aa).

Positions 53, 55, 57, 58, 110, 127, and 165 each coordinate Zn(2+).

It belongs to the metallo-beta-lactamase superfamily. Glyoxalase II family. As to quaternary structure, monomer. Requires Zn(2+) as cofactor.

The catalysed reaction is an S-(2-hydroxyacyl)glutathione + H2O = a 2-hydroxy carboxylate + glutathione + H(+). The protein operates within secondary metabolite metabolism; methylglyoxal degradation; (R)-lactate from methylglyoxal: step 2/2. Functionally, thiolesterase that catalyzes the hydrolysis of S-D-lactoyl-glutathione to form glutathione and D-lactic acid. In Citrobacter koseri (strain ATCC BAA-895 / CDC 4225-83 / SGSC4696), this protein is Hydroxyacylglutathione hydrolase.